A 98-amino-acid polypeptide reads, in one-letter code: Large ribosomal subunit protein bL27 (98 aa).

Residues 1–10 constitute a propeptide that is removed on maturation; it reads MELKMNLQLF. Positions 11-30 are disordered; it reads AQKKGTGSSKNGRDSISKRL.

Belongs to the bacterial ribosomal protein bL27 family. In terms of processing, the N-terminus is cleaved by ribosomal processing cysteine protease Prp.

The protein is Large ribosomal subunit protein bL27 of Natranaerobius thermophilus (strain ATCC BAA-1301 / DSM 18059 / JW/NM-WN-LF).